Consider the following 309-residue polypeptide: MVFPAKRLCVVPSMEGVRWAFSCGTWLPSRAEWLLAMRSIQPEEKERIGKFVFARDAKAALAGRLMIRKLVAEKLNIPWDHIRLQRTSKGKPVLAKDSLNPYPNFNFNISHQGDYAVLAAEPEVQVGIDIMKTSFPGRGSIPEFFHIMKRKFTKKEWETIRSFNDEWTQLDMFYRHWALKESFIKAIGVGLGFEMQRLEFDVSPLNMDIGQVYKETCLILDGEEEKEWAFEESKIDEHHFVAVAVRKPDGSRHQNVSYQDDSKLSQRKFTILNFNDLVASAIPMTPEDPSFWDCFCFTEEILIRNGTKS.

CoA is bound by residues Arg47, 86–91 (RTSKGK), and 108–111 (NISH). Residues Asp129 and Glu181 each contribute to the Mg(2+) site. CoA is bound at residue 181-185 (ESFIK).

It belongs to the P-Pant transferase superfamily. AcpS family. Monomer. The cofactor is Mg(2+).

It is found in the cytoplasm. The protein localises to the cytosol. The catalysed reaction is apo-[ACP] + CoA = holo-[ACP] + adenosine 3',5'-bisphosphate + H(+). The enzyme catalyses apo-[ACP] + acetyl-CoA = acetyl-[ACP] + adenosine 3',5'-bisphosphate + H(+). Its function is as follows. Catalyzes the post-translational modification of target proteins by phosphopantetheine. Can transfer the 4'-phosphopantetheine moiety from coenzyme A, regardless of whether the CoA is presented in the free thiol form or as an acetyl thioester, to a serine residue of a broad range of acceptors including the acyl carrier domain of FASN. This Mus musculus (Mouse) protein is L-aminoadipate-semialdehyde dehydrogenase-phosphopantetheinyl transferase (Aasdhppt).